Consider the following 250-residue polypeptide: Ribosomal RNA small subunit methyltransferase J (250 aa).

S-adenosyl-L-methionine contacts are provided by residues 96-97 (RD) and aspartate 168.

This sequence belongs to the methyltransferase superfamily. RsmJ family.

The protein localises to the cytoplasm. It carries out the reaction guanosine(1516) in 16S rRNA + S-adenosyl-L-methionine = N(2)-methylguanosine(1516) in 16S rRNA + S-adenosyl-L-homocysteine + H(+). Functionally, specifically methylates the guanosine in position 1516 of 16S rRNA. This chain is Ribosomal RNA small subunit methyltransferase J, found in Neisseria gonorrhoeae (strain NCCP11945).